Reading from the N-terminus, the 439-residue chain is MQIKENKQLCLISLGCSKNLVDSEVMLGKLYNYTLTNDTKSADVILINTCGFIESAKQESIQTILNAAKDKKKGAILIASGCLSERYKDEIKELIPEVDIFTGVGDYDKIDIMIAKKQNQFSEQVFLSEHYNARIITGSSVHAYVKISEGCNQKCSFCAIPSFKGKLQSRELDSILKEAENLALKGYTDMTFIAQDSSSFLYDKGQKDGLIQLISAIDKQQALKSARILYLYPSSTTLELISTIESSPIFQNYFDMPIQHISDSMLKKMRRNSSQAHHLKLLDAMKQVKESFIRSTIIVGHPEENEGEFEELSAFLDEFRFDRLNIFAFSAEENTHAYSLEKVPKKIINARIKALNKIALKHQNNSFKALLNKPIKALVENKEGEYFYKARDLRWAPEVDGEILINDSELATPLKPGHYTIMPSAFKDNILLAKVLSPF.

Positions 7–119 (KQLCLISLGC…IDIMIAKKQN (113 aa)) constitute an MTTase N-terminal domain. Cys16, Cys50, Cys82, Cys151, Cys155, and Cys158 together coordinate [4Fe-4S] cluster. Positions 137–365 (TGSSVHAYVK…NKIALKHQNN (229 aa)) constitute a Radical SAM core domain.

It belongs to the methylthiotransferase family. RimO subfamily. [4Fe-4S] cluster serves as cofactor.

It localises to the cytoplasm. It carries out the reaction L-aspartate(89)-[ribosomal protein uS12]-hydrogen + (sulfur carrier)-SH + AH2 + 2 S-adenosyl-L-methionine = 3-methylsulfanyl-L-aspartate(89)-[ribosomal protein uS12]-hydrogen + (sulfur carrier)-H + 5'-deoxyadenosine + L-methionine + A + S-adenosyl-L-homocysteine + 2 H(+). Its function is as follows. Catalyzes the methylthiolation of an aspartic acid residue of ribosomal protein uS12. The polypeptide is Ribosomal protein uS12 methylthiotransferase RimO (Helicobacter pylori (strain Shi470)).